We begin with the raw amino-acid sequence, 357 residues long: GTPase Obg (357 aa).

One can recognise an Obg domain in the interval 1–159 (MKFVDEAEIQ…RTLKLELKLL (159 aa)). The OBG-type G domain occupies 160-343 (ADIGMLGFPN…IMKSAMTLFE (184 aa)). GTP-binding positions include 166 to 173 (GFPNVGKS), 191 to 195 (FTTLY), 213 to 216 (DVPG), 293 to 296 (NKAD), and 324 to 326 (SAV). Mg(2+) is bound by residues Ser173 and Thr193.

It belongs to the TRAFAC class OBG-HflX-like GTPase superfamily. OBG GTPase family. Monomer. Mg(2+) serves as cofactor.

The protein localises to the cytoplasm. Its function is as follows. An essential GTPase which binds GTP, GDP and possibly (p)ppGpp with moderate affinity, with high nucleotide exchange rates and a fairly low GTP hydrolysis rate. Plays a role in control of the cell cycle, stress response, ribosome biogenesis and in those bacteria that undergo differentiation, in morphogenesis control. The sequence is that of GTPase Obg from Xylella fastidiosa (strain M12).